The chain runs to 141 residues: Putative pre-16S rRNA nuclease (141 aa).

Belongs to the YqgF nuclease family.

It is found in the cytoplasm. Could be a nuclease involved in processing of the 5'-end of pre-16S rRNA. This chain is Putative pre-16S rRNA nuclease, found in Aliivibrio fischeri (strain MJ11) (Vibrio fischeri).